A 552-amino-acid polypeptide reads, in one-letter code: Transcription factor lcsF (552 aa).

Disordered stretches follow at residues 1 to 132, 169 to 209, 232 to 258, and 297 to 349; these read MAPA…DLDP, TSSY…ASLS, EATS…HWSS, and ELTS…QHGA. The interval 31 to 55 is basic motif; the sequence is KDRKEKKRIQNRVAQRSYRSRMKAR. In terms of domain architecture, bZIP spans 31–76; that stretch reads KDRKEKKRIQNRVAQRSYRSRMKARLGELQSRLQAHEEQKAKEEAE. Positions 56–63 are leucine-zipper; it reads LGELQSRL. Over residues 64 to 79 the composition is skewed to basic and acidic residues; sequence QAHEEQKAKEEAERCD. Composition is skewed to polar residues over residues 98–119 and 169–186; these read TPPS…NSAS and TSSY…SLSQ. Residues 298–347 show a composition bias toward polar residues; it reads LTSTGDLPNATWRPSQQFSGPETTPRSHNAENPTQQQSPINDDTPSTTQH.

It belongs to the bZIP family.

It localises to the nucleus. In terms of biological role, transcription factor that regulates the expression of the gene cluster that mediates the biosynthesis of the lipopeptide antibiotics leucinostatins that show extensive biological activities, including antimalarial, antiviral, antibacterial, antifungal, and antitumor activities, as well as phytotoxic. All 20 genes in the cluster are up-regulated to some extent by lcsF, with the exception of lcsL and lcsP, which are down-regulated. The chain is Transcription factor lcsF from Purpureocillium lilacinum (Paecilomyces lilacinus).